Consider the following 146-residue polypeptide: Calmodulin-like protein 5 (146 aa).

Ala-2 bears the N-acetylalanine mark. 4 EF-hand domains span residues 8 to 43 (EEEAQYKKAFSAVDTDGNGTINAQELGAALKATGKN), 44 to 74 (LSEAQLRKLISEVDSDGDGEISFQEFLTAAK), 78 to 113 (AGLEDLQVAFRAFDQDGDGHITVDELRRAMAGLGQP), and 114 to 146 (LPQEELDAMIREADVDQDGRVNYEEFARMLAQE). The Ca(2+) site is built by Asp-21, Asp-23, Asn-25, Thr-27, Glu-32, Asp-57, Asp-59, Asp-61, Glu-63, Glu-68, Asp-91, Asp-93, Asp-95, His-97, Glu-102, Asp-127, Asp-129, Asp-131, Arg-133, and Glu-138.

As to quaternary structure, associates with transglutaminase 3. In terms of tissue distribution, particularly abundant in the epidermis where its expression is directly related to keratinocyte differentiation. Very low expression in lung.

Functionally, binds calcium. May be involved in terminal differentiation of keratinocytes. This chain is Calmodulin-like protein 5 (CALML5), found in Homo sapiens (Human).